Consider the following 76-residue polypeptide: Small ribosomal subunit protein bS18 (76 aa).

The protein belongs to the bacterial ribosomal protein bS18 family. In terms of assembly, part of the 30S ribosomal subunit. Forms a tight heterodimer with protein bS6.

Its function is as follows. Binds as a heterodimer with protein bS6 to the central domain of the 16S rRNA, where it helps stabilize the platform of the 30S subunit. The protein is Small ribosomal subunit protein bS18 of Pseudomonas entomophila (strain L48).